The following is a 207-amino-acid chain: 2,3-bisphosphoglycerate-dependent phosphoglycerate mutase (207 aa).

Substrate contacts are provided by residues 10–17 (RHGQSEWN), 23–24 (TG), Arg62, 89–92 (ERDY), Lys100, 116–117 (RR), and 160–161 (GN). Residue His11 is the Tele-phosphohistidine intermediate of the active site. Residue Glu89 is the Proton donor/acceptor of the active site.

The protein belongs to the phosphoglycerate mutase family. BPG-dependent PGAM subfamily. In terms of assembly, homodimer.

It carries out the reaction (2R)-2-phosphoglycerate = (2R)-3-phosphoglycerate. The protein operates within carbohydrate degradation; glycolysis; pyruvate from D-glyceraldehyde 3-phosphate: step 3/5. Catalyzes the interconversion of 2-phosphoglycerate and 3-phosphoglycerate. This Bradyrhizobium sp. (strain ORS 278) protein is 2,3-bisphosphoglycerate-dependent phosphoglycerate mutase.